We begin with the raw amino-acid sequence, 430 residues long: Probable histidine--tRNA ligase, cytoplasmic (430 aa).

It belongs to the class-II aminoacyl-tRNA synthetase family.

It is found in the cytoplasm. It carries out the reaction tRNA(His) + L-histidine + ATP = L-histidyl-tRNA(His) + AMP + diphosphate + H(+). This chain is Probable histidine--tRNA ligase, cytoplasmic, found in Vairimorpha ceranae (strain BRL01) (Microsporidian parasite).